The following is a 315-amino-acid chain: Acetyl-coenzyme A carboxylase carboxyl transferase subunit alpha (315 aa).

The CoA carboxyltransferase C-terminal domain occupies 38–292 (RLQKKSNELT…KLRLKEDLAE (255 aa)).

Belongs to the AccA family. Acetyl-CoA carboxylase is a heterohexamer composed of biotin carboxyl carrier protein (AccB), biotin carboxylase (AccC) and two subunits each of ACCase subunit alpha (AccA) and ACCase subunit beta (AccD).

It is found in the cytoplasm. The catalysed reaction is N(6)-carboxybiotinyl-L-lysyl-[protein] + acetyl-CoA = N(6)-biotinyl-L-lysyl-[protein] + malonyl-CoA. It functions in the pathway lipid metabolism; malonyl-CoA biosynthesis; malonyl-CoA from acetyl-CoA: step 1/1. Functionally, component of the acetyl coenzyme A carboxylase (ACC) complex. First, biotin carboxylase catalyzes the carboxylation of biotin on its carrier protein (BCCP) and then the CO(2) group is transferred by the carboxyltransferase to acetyl-CoA to form malonyl-CoA. This chain is Acetyl-coenzyme A carboxylase carboxyl transferase subunit alpha, found in Haemophilus influenzae (strain 86-028NP).